A 544-amino-acid chain; its full sequence is MAKDIKFSEEARRSMLRGVDTLANAVKVTLGPKGRNVVLEKKFGSPLITNDGVTIAKEIELEDAFENMGAKLVAEVASKTNDVAGDGTTTATVLAQAMIREGLKNVTAGANPMGLRKGIEKAVTAAIEELKTISKPIEGKSSIAQVAAISAADEEVGQLIAEAMERVGNDGVITLEESKGFTTELDVVEGMQFDRGYASPYMITDSDKMEAVLDNPYILITDKKISNIQEILPVLEQVVQQGKPLLIIAEDVEGEALATLVVNKLRGTFNVVAVKAPGFGDRRKAMLEDIAILTGGEVITEELGRDLKSATVESLGRAGKVVVTKENTTVVEGIGNTQQIEARIGQIRAQLEETTSEFDREKLQERLAKLAGGVAVIKVGAATETELKERKLRIEDALNSTRAAVEEGIVAGGGTSLMNVYTKVASIVAEGDEATGINIVLRALEEPVRQIAINAGLEGSVVVERLKGEKVGVGFNAATGEWVNMLETGIVDPAKVTRSALQNAASVAAMFLTTEAVVADKPEPNAPAMPDMGGMGMGGMGGMM.

ATP-binding positions include 29-32 (TLGP), 86-90 (DGTTT), glycine 413, 476-478 (NAA), and aspartate 492.

It belongs to the chaperonin (HSP60) family. Forms a cylinder of 14 subunits composed of two heptameric rings stacked back-to-back. Interacts with the co-chaperonin GroES.

It is found in the cytoplasm. It catalyses the reaction ATP + H2O + a folded polypeptide = ADP + phosphate + an unfolded polypeptide.. Its function is as follows. Together with its co-chaperonin GroES, plays an essential role in assisting protein folding. The GroEL-GroES system forms a nano-cage that allows encapsulation of the non-native substrate proteins and provides a physical environment optimized to promote and accelerate protein folding. The protein is Chaperonin GroEL of Bacillus cereus.